A 122-amino-acid chain; its full sequence is Large ribosomal subunit protein uL18 (122 aa).

This sequence belongs to the universal ribosomal protein uL18 family. As to quaternary structure, part of the 50S ribosomal subunit; part of the 5S rRNA/L5/L18/L25 subcomplex. Contacts the 5S and 23S rRNAs.

This is one of the proteins that bind and probably mediate the attachment of the 5S RNA into the large ribosomal subunit, where it forms part of the central protuberance. The sequence is that of Large ribosomal subunit protein uL18 from Ruminiclostridium cellulolyticum (strain ATCC 35319 / DSM 5812 / JCM 6584 / H10) (Clostridium cellulolyticum).